The primary structure comprises 537 residues: Hexahomomethionine N-hydroxylase (537 aa).

The chain crosses the membrane as a helical span at residues 7 to 27 (FNTCFQILLGFIVFIASITLL).

Belongs to the cytochrome P450 family. Requires heme as cofactor. As to expression, highly expressed in hypocotyl and roots. Lower expression in siliques, stems and leaves. Barely detectable in flowers. Expressed only in the vascular bundles in apical plant parts.

Its subcellular location is the endoplasmic reticulum membrane. It catalyses the reaction L-hexahomomethionine + 2 reduced [NADPH--hemoprotein reductase] + 2 O2 = (E)-9-(methylsulfanyl)nonanal oxime + 2 oxidized [NADPH--hemoprotein reductase] + CO2 + 3 H2O + 2 H(+). It carries out the reaction L-pentahomomethionine + 2 reduced [NADPH--hemoprotein reductase] + 2 O2 = (E)-8-(methylsulfanyl)octanal oxime + 2 oxidized [NADPH--hemoprotein reductase] + CO2 + 3 H2O + 2 H(+). The catalysed reaction is an L-polyhomomethionine + 2 reduced [NADPH--hemoprotein reductase] + 2 O2 = an (E)-omega-(methylsulfanyl)-alkanal oxime + 2 oxidized [NADPH--hemoprotein reductase] + CO2 + 3 H2O + 2 H(+). Catalyzes the conversion of the long chain elongated methionines penta- and hexahomomethionine to their corresponding aldoximes 8-methylthiooctanaldoxime and 9-methylthiononanaldoxime. The protein is Hexahomomethionine N-hydroxylase (CYP79F2) of Arabidopsis thaliana (Mouse-ear cress).